The chain runs to 231 residues: Regulatory protein VanR (231 aa).

Residues 4 to 117 (KILIVDDEHE…ELIARVKAQL (114 aa)) form the Response regulatory domain. Asp53 is modified (4-aspartylphosphate). Positions 131–231 (ENVIVHSGLV…VWGVGYKIEK (101 aa)) form a DNA-binding region, ompR/PhoB-type.

As to quaternary structure, monomer. In terms of processing, phosphorylated by VanS. Dephosphorylated by VanS. Can be phosphorylated nonenzymatically by acetyl-phosphate.

It localises to the cytoplasm. Its function is as follows. Member of the two-component regulatory system VanS/VanR. Binds to the promoter regions of target genes, including vanH and vanR; phosphorylation of VanR increases binding affinity to the vanH and vanR promoters significantly. DNA binding may be inhibited by the cognate sensor protein, VanS. Activates the transcription of vanH, vanA and vanX in response to vancomycin which results in vancomycin resistance. Involved in conferring vancomycin resistance. The sequence is that of Regulatory protein VanR (vanR) from Enterococcus faecium (Streptococcus faecium).